Reading from the N-terminus, the 137-residue chain is Ribonuclease VapC3 (137 aa).

The 118-residue stretch at 12-129 (VVVDASAMVD…LTTDERLARA (118 aa)) folds into the PINc domain. 2 residues coordinate Mg(2+): Asp-15 and Asp-105.

The protein belongs to the PINc/VapC protein family. It depends on Mg(2+) as a cofactor.

Toxic component of a type II toxin-antitoxin (TA) system. An RNase. Its toxic effect is neutralized by coexpression with cognate antitoxin VapB3. In Mycobacterium tuberculosis (strain CDC 1551 / Oshkosh), this protein is Ribonuclease VapC3.